The sequence spans 380 residues: NADPH quinone oxidoreductase (380 aa).

Residues 1 to 17 constitute a mitochondrion transit peptide; the sequence is MSSFLSKRFISTTQRAM.

This sequence belongs to the zinc-containing alcohol dehydrogenase family. Quinone oxidoreductase subfamily. In terms of assembly, homodimer.

The protein resides in the mitochondrion. The enzyme catalyses a quinone + NADH + H(+) = a quinol + NAD(+). It catalyses the reaction a quinone + NADPH + H(+) = a quinol + NADP(+). NADPH quinone oxidoreductase that efficiently reduces 1,4-benzoquinone, whereas no activities are found for menadiones and methoxyquinones. The sequence is that of NADPH quinone oxidoreductase from Kluyveromyces marxianus (Yeast).